A 375-amino-acid chain; its full sequence is Meiotic driver cw27 (375 aa).

2 disordered regions span residues 1 to 42 (MKNK…STLP) and 74 to 103 (DYDE…GTTD). The span at 11–29 (SMDELSTKNDNEIDLEKGP) shows a compositional bias: basic and acidic residues. Transmembrane regions (helical) follow at residues 108-128 (FLIK…PAVC), 145-165 (WTLI…SWCF), 172-192 (AVKV…ISLA), 208-228 (EMMI…FGCV), 245-265 (TISA…WTLW), 272-292 (LQVL…MSLF), and 336-356 (VIGF…NAIG).

The protein belongs to the WTF family. Homomer. Forms protein aggregates. The two isoforms can interact with each other and with themselves. High sequence similarity is required for their interaction.

The protein resides in the spore membrane. The protein localises to the vacuole. It is found in the membrane. It localises to the ascus epiplasm. Its subcellular location is the cytoplasm. The protein resides in the endoplasmic reticulum. Functionally, promotes unequal transmission of alleles from the parental zygote to progeny spores by acting as poison/antidote system where the poison and antidote proteins are produced from the same locus; the poison component is trans-acting and targets all spores within an ascus whereas the antidote component is spore-specific, leading to poisoning of all progeny that do not inherit the allele. Localizes isoform 2 to the vacuole thereby facilitating its degradation. In terms of biological role, forms toxic aggregates that disrupt spore maturation. The polypeptide is Meiotic driver cw27 (Schizosaccharomyces pombe (Fission yeast)).